Here is a 463-residue protein sequence, read N- to C-terminus: Asparagine--tRNA ligase (463 aa).

The protein belongs to the class-II aminoacyl-tRNA synthetase family. In terms of assembly, homodimer.

It is found in the cytoplasm. It catalyses the reaction tRNA(Asn) + L-asparagine + ATP = L-asparaginyl-tRNA(Asn) + AMP + diphosphate + H(+). This Clostridium botulinum (strain ATCC 19397 / Type A) protein is Asparagine--tRNA ligase.